We begin with the raw amino-acid sequence, 438 residues long: Glucosamine kinase (438 aa).

ATP is bound by residues lysine 133, 186–188 (AYL), and aspartate 193. Position 300 (aspartate 300) interacts with D-glucosamine. Mg(2+)-binding residues include glutamine 305, aspartate 317, and aspartate 319. Residues 405-420 (QEVREYLYAVRHLPHW) carry the Substrate specificity determinant motif motif. A D-glucosamine-binding site is contributed by glutamate 409.

It belongs to the actinobacterial glucosamine kinase family. As to quaternary structure, monomer. It depends on Mg(2+) as a cofactor.

The catalysed reaction is D-glucosamine + ATP = D-glucosamine 6-phosphate + ADP + H(+). Its function is as follows. Catalyzes the ATP-dependent phosphorylation of D-glucosamine (GlcN) to D-glucosamine 6-phosphate. May be involved in the phosphorylation of acquired extracellular GlcN derived from the hydrolysis of chitosan, i.e., in the incorporation of exogenous GlcN into the bacterial GlcNAc metabolism. To a lesser extent, is also active on glucose, but is unable to phosphorylate maltose, 18 other sugars and several aminoglycoside antibiotics. The chain is Glucosamine kinase from Streptacidiphilus jiangxiensis.